The chain runs to 155 residues: Troponin C, body wall muscle (155 aa).

Residue Val1 is modified to N-acetylvaline. 4 EF-hand domains span residues 7 to 43 (DEKS…LGQN), 44 to 79 (PTEK…QMQA), 88 to 121 (REEK…TGEN), and 122 to 155 (VETW…KFVQ). Ca(2+)-binding residues include Asp57, Asp59, Ser61, Thr63, and Glu68. Residues Asp135, Asn137, Asp139, Gln141, and Glu146 each coordinate Ca(2+).

The protein belongs to the troponin C family.

Troponin is the central regulatory protein of muscle contraction. Tn consists of three components: Tn-I which is the inhibitor of actomyosin ATPase, Tn-T which contains the binding site for tropomyosin and Tn-C. The binding of calcium to Tn-C abolishes the inhibitory action of Tn on actin filaments. The polypeptide is Troponin C, body wall muscle (Halocynthia roretzi (Sea squirt)).